Consider the following 190-residue polypeptide: Large ribosomal subunit protein uL5 (190 aa).

It belongs to the universal ribosomal protein uL5 family. Part of the 50S ribosomal subunit; part of the 5S rRNA/L5/L18/L25 subcomplex. Contacts the 5S rRNA and the P site tRNA. Forms a bridge to the 30S subunit in the 70S ribosome.

This is one of the proteins that bind and probably mediate the attachment of the 5S RNA into the large ribosomal subunit, where it forms part of the central protuberance. In the 70S ribosome it contacts protein S13 of the 30S subunit (bridge B1b), connecting the 2 subunits; this bridge is implicated in subunit movement. Contacts the P site tRNA; the 5S rRNA and some of its associated proteins might help stabilize positioning of ribosome-bound tRNAs. This chain is Large ribosomal subunit protein uL5, found in Bifidobacterium adolescentis (strain ATCC 15703 / DSM 20083 / NCTC 11814 / E194a).